We begin with the raw amino-acid sequence, 335 residues long: Mitochondrial carrier protein CoAc2 (335 aa).

6 consecutive transmembrane segments (helical) span residues 12-32 (SGPG…AGGV), 75-95 (FYRG…LHYM), 119-139 (LVAG…LDLV), 187-207 (GMAP…YFYE), 225-242 (LGCG…TYPL), and 280-302 (LFSG…FTVY). Solcar repeat units lie at residues 17–103 (PLAV…YRRW), 113–212 (QGPV…MKSH), and 219–308 (KGII…MKVC).

Belongs to the mitochondrial carrier (TC 2.A.29) family. Expressed throughout the plant.

Its subcellular location is the mitochondrion inner membrane. In terms of biological role, required for the accumulation of coenzyme A in the mitochondrial matrix. This chain is Mitochondrial carrier protein CoAc2, found in Zea mays (Maize).